Reading from the N-terminus, the 410-residue chain is Probable serine/threonine-protein kinase PBL8 (410 aa).

Residues 1-10 show a composition bias toward basic and acidic residues; sequence MGNCGTRDEA. A disordered region spans residues 1–45; it reads MGNCGTRDEAAVFTPQAQAQQLQKKHSRSVSDLSDPSTPRFRDDS. A lipid anchor (N-myristoyl glycine) is attached at glycine 2. Cysteine 4 carries the S-palmitoyl cysteine lipid modification. Phosphothreonine is present on threonine 58. One can recognise a Protein kinase domain in the interval 69 to 350; it reads FRPDYILGEG…DVVETLEPLQ (282 aa). Residues 75–83 and lysine 104 each bind ATP; that span reads LGEGGFGTV. The residue at position 149 (tyrosine 149) is a Phosphotyrosine. Catalysis depends on aspartate 199, which acts as the Proton acceptor. Phosphoserine occurs at positions 203 and 233. Phosphothreonine occurs at positions 234 and 239. Position 247 is a phosphotyrosine (tyrosine 247).

Belongs to the protein kinase superfamily. Ser/Thr protein kinase family. As to quaternary structure, interacts with the Xanthomonas campestris effector XopAC/AvrAC.

It localises to the cell membrane. It catalyses the reaction L-seryl-[protein] + ATP = O-phospho-L-seryl-[protein] + ADP + H(+). The catalysed reaction is L-threonyl-[protein] + ATP = O-phospho-L-threonyl-[protein] + ADP + H(+). Its function is as follows. May be involved in plant defense signaling. This chain is Probable serine/threonine-protein kinase PBL8, found in Arabidopsis thaliana (Mouse-ear cress).